The primary structure comprises 101 residues: Phosphoprotein OPG062 (101 aa).

A disordered region spans residues Lys50–Gly73. Basic and acidic residues predominate over residues Cys56–Arg68.

It belongs to the orthopoxvirus OPG062 family. In terms of assembly, self-associates to form high molecular-weight forms. Interacts with protein OPG157. Interacts with host RICTOR and RPTOR; these interactions disrupt the mTORC1 and mTORC2 crosstalk.

The protein resides in the virion. Plays an essential role in virion assembly and morphogenesis. Also plays a role in the inhibition of host immune response by dysregulating mTOR. Sequesters host RICTOR and RPTOR, thereby disrupting mTORC1 and mTORC2 crosstalk. In turn, blocks the host antiviral response in part through mTOR-dependent degradation of cGAS, the primary poxvirus sensor. The protein is Phosphoprotein OPG062 (OPG062) of Monkeypox virus.